A 222-amino-acid polypeptide reads, in one-letter code: Eukaryotic translation initiation factor 3 subunit K (222 aa).

A PCI domain is found at 46–208 (YDLEANLAVL…KIKTKNITEK (163 aa)).

The protein belongs to the eIF-3 subunit K family. As to quaternary structure, component of the eukaryotic translation initiation factor 3 (eIF-3) complex. The eIF-3 complex interacts with pix.

Its subcellular location is the cytoplasm. Its function is as follows. Component of the eukaryotic translation initiation factor 3 (eIF-3) complex, which is involved in protein synthesis of a specialized repertoire of mRNAs and, together with other initiation factors, stimulates binding of mRNA and methionyl-tRNAi to the 40S ribosome. The eIF-3 complex specifically targets and initiates translation of a subset of mRNAs involved in cell proliferation. This Drosophila persimilis (Fruit fly) protein is Eukaryotic translation initiation factor 3 subunit K.